Consider the following 233-residue polypeptide: Cilia- and flagella-associated protein 299 (233 aa).

It is found in the cytoplasm. Its subcellular location is the nucleus. May be involved in spermatogenesis. The sequence is that of Cilia- and flagella-associated protein 299 from Homo sapiens (Human).